The sequence spans 404 residues: AT-hook motif nuclear-localized protein 3 (404 aa).

3 disordered regions span residues 1–51, 70–100, and 113–133; these read MEER…VPPT, PFSLTMPTENTSAEQLKKKRGRPRKYNPDGT, and SVPLTSEFPPRKRGRGRGKSN. Positions 7 to 19 are enriched in polar residues; the sequence is TNINNNITSSFGL. Positions 35–51 are enriched in pro residues; that stretch reads DPPPRPENPNPFLVPPT. The segment covering 71 to 83 has biased composition (polar residues); the sequence is FSLTMPTENTSAE. Positions 86 to 94 match the Bipartite nuclear localization signal motif; sequence KKKRGRPRK. Residues 86 to 98 constitute a DNA-binding region (a.T hook); it reads KKKRGRPRKYNPD. Residues 123–133 are compositionally biased toward basic residues; sequence RKRGRGRGKSN. Residues 163-308 enclose the PPC domain; the sequence is GANFTPHVLI…RFGAQPSSIS (146 aa). Residues 359–404 are disordered; the sequence is PFSSIPVGGGGGGEVGEEEGEEDDDELEGEDEEFGGDSQSDNEIPS. The span at 373-393 shows a compositional bias: acidic residues; the sequence is VGEEEGEEDDDELEGEDEEFG.

As to quaternary structure, homodimer. Interacts with AHL4. As to expression, expressed in both procambium and xylem precursors of the root meristem. Also detected in the endodermis in the late elongation zone and onwards.

Its subcellular location is the nucleus. Functionally, transcription factor that specifically binds AT-rich DNA sequences related to the nuclear matrix attachment regions (MARs). Acts redundantly with AHL4 to regulate the formation of tissue boundary between the xylem and procambium in the root meristem. This Arabidopsis thaliana (Mouse-ear cress) protein is AT-hook motif nuclear-localized protein 3.